The following is a 193-amino-acid chain: MIGRIAGVLLEKNPPHLLIDCNGVGYEVDVPMSTFYNLPSTGERVVLLTQMIVREDAHLLYGFGTAEERSTFRELLKISGIGARMALAVLSGMSVHELAQTVTMQDAARLTRVPGIGKKTAERLLLELKGKIGADLGAMAGAASASDHASDILNALLALGYSEKEALTAVKNVPAGTGVSEGIKLALKALSKG.

Residues 1-64 (MIGRIAGVLL…EDAHLLYGFG (64 aa)) are domain I. The domain II stretch occupies residues 65 to 139 (TAEERSTFRE…GKIGADLGAM (75 aa)). The flexible linker stretch occupies residues 139–143 (MAGAA). The interval 144-193 (SASDHASDILNALLALGYSEKEALTAVKNVPAGTGVSEGIKLALKALSKG) is domain III.

Belongs to the RuvA family. Homotetramer. Forms an RuvA(8)-RuvB(12)-Holliday junction (HJ) complex. HJ DNA is sandwiched between 2 RuvA tetramers; dsDNA enters through RuvA and exits via RuvB. An RuvB hexamer assembles on each DNA strand where it exits the tetramer. Each RuvB hexamer is contacted by two RuvA subunits (via domain III) on 2 adjacent RuvB subunits; this complex drives branch migration. In the full resolvosome a probable DNA-RuvA(4)-RuvB(12)-RuvC(2) complex forms which resolves the HJ.

It localises to the cytoplasm. In terms of biological role, the RuvA-RuvB-RuvC complex processes Holliday junction (HJ) DNA during genetic recombination and DNA repair, while the RuvA-RuvB complex plays an important role in the rescue of blocked DNA replication forks via replication fork reversal (RFR). RuvA specifically binds to HJ cruciform DNA, conferring on it an open structure. The RuvB hexamer acts as an ATP-dependent pump, pulling dsDNA into and through the RuvAB complex. HJ branch migration allows RuvC to scan DNA until it finds its consensus sequence, where it cleaves and resolves the cruciform DNA. This is Holliday junction branch migration complex subunit RuvA from Paraburkholderia phytofirmans (strain DSM 17436 / LMG 22146 / PsJN) (Burkholderia phytofirmans).